A 391-amino-acid chain; its full sequence is uncharacterized protein (391 aa).

11 helical membrane passes run 15–35 (LSFCVVFLLRMLGIFSVLPIL), 48–68 (FLIGLAVGIYGATQIVFQIPF), 81–101 (IIFGLFIFFIGSLIVVSTNSI), 139–159 (IIGVSFAVSFLISVVSAPIIA), 167–187 (IFWISAVFSIFSILIVFFLIP), 217–237 (FYLGVFLLHFLLTMNFLIIPY), 251–271 (IVYFATIVFSFFFLFLIVFYF), 275–295 (FFLKNIIEICIFFIFLSLLLF), 303–323 (ICLTFALQIFFIAFNILEIFF), 346–366 (TSQFLGIACGGVLNGLLCTFF), and 369–389 (NHIFLFEIFITLIWFIFSFFC).

The protein belongs to the major facilitator superfamily.

It localises to the cell membrane. This is an uncharacterized protein from Buchnera aphidicola subsp. Schizaphis graminum (strain Sg).